Here is a 372-residue protein sequence, read N- to C-terminus: MSLFFLWLVTYYVGTLGTHTEIKRVAEEKVTLPCHHQLGLPEKDTLDIEWLLTDNEGNQKVVITYSSRHVYNNLTEEQKGRVAFASNFLAGDASLQIEPLKPSDEGRYTCKVKNSGRYVWSHVILKVLVRPSKPKCELEGEPTEGSDLTLQCESASGTKPIVYYWQRIREKEGEDEHLPPKSRIDYNNPGRVLLQNLTMASSGLYQCTAGNEAGKESCVVRVTVQYVQSIGMVAGAVTGIVAGALLIFLLIWLLIRRKSKERYEEEDRPNEIREDAEAPRARLVKPSSSSSGSRSSRSGSSSTRSTGNSASRSQRTLSSEAAPQPGLATQAYSLIGPEVRGSEPKKAHHTTLTKAETTLSTMPSQSRAFQTV.

The signal sequence occupies residues 1-17 (MSLFFLWLVTYYVGTLG). Ig-like C2-type domains lie at 18 to 126 (THTE…VILK) and 134 to 223 (PKCE…VRVT). Residues 18–234 (THTEIKRVAE…QYVQSIGMVA (217 aa)) lie on the Extracellular side of the membrane. Intrachain disulfides connect Cys34/Cys110 and Cys152/Cys207. Residues Asn73 and Asn196 are each glycosylated (N-linked (GlcNAc...) asparagine). Residues 235–255 (GAVTGIVAGALLIFLLIWLLI) form a helical membrane-spanning segment. Residues 256–372 (RRKSKERYEE…PSQSRAFQTV (117 aa)) are Cytoplasmic-facing. Residues 263–280 (YEEEDRPNEIREDAEAPR) show a composition bias toward basic and acidic residues. The disordered stretch occupies residues 263–372 (YEEEDRPNEI…PSQSRAFQTV (110 aa)). Composition is skewed to low complexity over residues 287-313 (SSSS…ASRS) and 352-361 (LTKAETTLST). The span at 362-372 (MPSQSRAFQTV) shows a compositional bias: polar residues.

As to expression, predominantly expressed in the white adipose tissue.

The protein localises to the cell junction. It is found in the tight junction. It localises to the cell membrane. Its function is as follows. May be involved in the cell-cell adhesion. May play a role in adipocyte differentiation and development of obesity. Is required for normal small intestine development. This chain is CXADR-like membrane protein (Clmp), found in Rattus norvegicus (Rat).